Here is a 1325-residue protein sequence, read N- to C-terminus: uncharacterized protein (1325 aa).

Residues 1-18 (MNRIYRVIWNCTLQVFQA) form the signal peptide. The N-palmitoyl cysteine moiety is linked to residue Cys-19. Cys-19 carries S-diacylglycerol cysteine lipidation.

This sequence to E.coli YfaL.

Its subcellular location is the cell membrane. This is an uncharacterized protein from Escherichia coli (strain K12).